The sequence spans 142 residues: Large ribosomal subunit protein uL13 (142 aa).

It belongs to the universal ribosomal protein uL13 family. In terms of assembly, part of the 50S ribosomal subunit.

Its function is as follows. This protein is one of the early assembly proteins of the 50S ribosomal subunit, although it is not seen to bind rRNA by itself. It is important during the early stages of 50S assembly. The protein is Large ribosomal subunit protein uL13 of Saccharophagus degradans (strain 2-40 / ATCC 43961 / DSM 17024).